The following is a 201-amino-acid chain: Probable GTP-binding protein EngB (201 aa).

The EngB-type G domain occupies 23–196; the sequence is TGPEIALAGR…HEAVEEILSM (174 aa). GTP-binding positions include 31-38, 58-62, 76-79, 143-146, and 175-177; these read GRSNVGKS, GKTQM, DLPG, TKAD, and YSA. Mg(2+) is bound by residues Ser38 and Thr60.

It belongs to the TRAFAC class TrmE-Era-EngA-EngB-Septin-like GTPase superfamily. EngB GTPase family. Requires Mg(2+) as cofactor.

Necessary for normal cell division and for the maintenance of normal septation. The polypeptide is Probable GTP-binding protein EngB (Desulfitobacterium hafniense (strain DSM 10664 / DCB-2)).